A 399-amino-acid chain; its full sequence is Subtilisin-like protease 4 (399 aa).

The signal sequence occupies residues 1–19 (MVCLKTLSVFLAAFAVADA). Positions 20-118 (RAVFKTQSNK…VEQDQVVRIS (99 aa)) are excised as a propeptide. An Inhibitor I9 domain is found at 38 to 117 (YIVVMKDGVS…YVEQDQVVRI (80 aa)). Residues 128–399 (SWGLGRVSHR…NRLLYNGSGQ (272 aa)) form the Peptidase S8 domain. Active-site charge relay system residues include D160 and H191. N-linked (GlcNAc...) asparagine glycosylation occurs at N252. S346 serves as the catalytic Charge relay system. A compositionally biased stretch (polar residues) spans 380–392 (AISNPGSGTTNRL). The tract at residues 380-399 (AISNPGSGTTNRLLYNGSGQ) is disordered. N395 carries N-linked (GlcNAc...) asparagine glycosylation.

It belongs to the peptidase S8 family.

It localises to the secreted. Functionally, secreted subtilisin-like serine protease with keratinolytic activity that contributes to pathogenicity. In Arthroderma gypseum (strain ATCC MYA-4604 / CBS 118893) (Microsporum gypseum), this protein is Subtilisin-like protease 4 (SUB4).